The sequence spans 129 residues: Lysozyme C (129 aa).

The 129-residue stretch at 1-129 folds into the C-type lysozyme domain; that stretch reads KVFGRCELAA…VRVWIKGCRL (129 aa). 4 cysteine pairs are disulfide-bonded: Cys6–Cys127, Cys30–Cys115, Cys64–Cys80, and Cys76–Cys94. Active-site residues include Glu35 and Asp52.

Belongs to the glycosyl hydrolase 22 family. In terms of assembly, monomer.

It localises to the secreted. The enzyme catalyses Hydrolysis of (1-&gt;4)-beta-linkages between N-acetylmuramic acid and N-acetyl-D-glucosamine residues in a peptidoglycan and between N-acetyl-D-glucosamine residues in chitodextrins.. In terms of biological role, lysozymes have primarily a bacteriolytic function; those in tissues and body fluids are associated with the monocyte-macrophage system and enhance the activity of immunoagents. The polypeptide is Lysozyme C (LYZ) (Numida meleagris (Helmeted guineafowl)).